Here is a 660-residue protein sequence, read N- to C-terminus: Arginine--tRNA ligase, cytoplasmic (660 aa).

Met1 carries the post-translational modification N-acetylmethionine. The could be involved in the assembly of the multisynthetase complex stretch occupies residues 1 to 72; it reads MDGLVAQCSA…QEERRKPTKN (72 aa). L-arginine-binding positions include 200 to 202, His211, Tyr384, Asp388, and Gln412; that span reads SPN. The short motif at 201–212 is the 'HIGH' region element; that stretch reads PNIAKEMHVGHL. Residues 529 to 543 form an interaction with tRNA region; that stretch reads NTAAYLLYAFTRIRS.

It belongs to the class-I aminoacyl-tRNA synthetase family. As to quaternary structure, interacts (via N-terminus) with AIMP1 (via N-terminus); this stimulates its catalytic activity. Interacts (via N-terminus) with LARS2 (via C-terminus). Monomer. Part of a multisubunit complex that groups tRNA ligases for Arg (RARS1), Asp (DARS1), Gln (QARS1), Ile (IARS1), Leu (LARS1), Lys (KARS1), Met (MARS1) the bifunctional ligase for Glu and Pro (EPRS1) and the auxiliary subunits AIMP1/p43, AIMP2/p38 and EEF1E1/p18. Interacts with QARS1. Part of a complex composed of RARS1, QARS1 and AIMP1.

The protein localises to the cytoplasm. The protein resides in the cytosol. The catalysed reaction is tRNA(Arg) + L-arginine + ATP = L-arginyl-tRNA(Arg) + AMP + diphosphate. Functionally, forms part of a macromolecular complex that catalyzes the attachment of specific amino acids to cognate tRNAs during protein synthesis. Modulates the secretion of AIMP1 and may be involved in generation of the inflammatory cytokine EMAP2 from AIMP1. The sequence is that of Arginine--tRNA ligase, cytoplasmic (Rars1) from Mus musculus (Mouse).